Reading from the N-terminus, the 121-residue chain is Large ribosomal subunit protein uL18 (121 aa).

Belongs to the universal ribosomal protein uL18 family. In terms of assembly, part of the 50S ribosomal subunit; part of the 5S rRNA/L5/L18/L25 subcomplex. Contacts the 5S and 23S rRNAs.

This is one of the proteins that bind and probably mediate the attachment of the 5S RNA into the large ribosomal subunit, where it forms part of the central protuberance. In Dehalococcoides mccartyi (strain ATCC BAA-2266 / KCTC 15142 / 195) (Dehalococcoides ethenogenes (strain 195)), this protein is Large ribosomal subunit protein uL18.